A 208-amino-acid chain; its full sequence is Ubiquitin-conjugating enzyme E2 S (208 aa).

In terms of domain architecture, UBC core spans 14 to 160 (QTIRQVMKEL…ARMMTEIHAQ (147 aa)). The Glycyl thioester intermediate role is filled by C98. Residues 161-193 (PAKCGAGASDAKDDDGPSTKKHAGLDKKLQDKK) form a disordered region. A compositionally biased stretch (basic and acidic residues) spans 170-193 (DAKDDDGPSTKKHAGLDKKLQDKK).

Belongs to the ubiquitin-conjugating enzyme family.

The enzyme catalyses S-ubiquitinyl-[E1 ubiquitin-activating enzyme]-L-cysteine + [E2 ubiquitin-conjugating enzyme]-L-cysteine = [E1 ubiquitin-activating enzyme]-L-cysteine + S-ubiquitinyl-[E2 ubiquitin-conjugating enzyme]-L-cysteine.. Its pathway is protein modification; protein ubiquitination. Functionally, catalyzes the covalent attachment of ubiquitin to other proteins. Acts as an essential factor of the anaphase promoting complex/cyclosome (APC/C), a cell cycle-regulated ubiquitin ligase that controls progression through mitosis. Acts by specifically elongating polyubiquitin chains initiated by the E2 enzyme vih/UbcH10 on APC/C substrates, enhancing the degradation of APC/C substrates by the proteasome and promoting mitotic exit. This is Ubiquitin-conjugating enzyme E2 S from Drosophila virilis (Fruit fly).